Here is a 613-residue protein sequence, read N- to C-terminus: Dihydroxy-acid dehydratase (613 aa).

Mg(2+) is bound at residue Asp-81. [2Fe-2S] cluster is bound at residue Cys-122. 2 residues coordinate Mg(2+): Asp-123 and Lys-124. The residue at position 124 (Lys-124) is an N6-carboxylysine. Position 193 (Cys-193) interacts with [2Fe-2S] cluster. A Mg(2+)-binding site is contributed by Glu-489. Catalysis depends on Ser-515, which acts as the Proton acceptor.

This sequence belongs to the IlvD/Edd family. In terms of assembly, homodimer. [2Fe-2S] cluster is required as a cofactor. The cofactor is Mg(2+).

It catalyses the reaction (2R)-2,3-dihydroxy-3-methylbutanoate = 3-methyl-2-oxobutanoate + H2O. The enzyme catalyses (2R,3R)-2,3-dihydroxy-3-methylpentanoate = (S)-3-methyl-2-oxopentanoate + H2O. It participates in amino-acid biosynthesis; L-isoleucine biosynthesis; L-isoleucine from 2-oxobutanoate: step 3/4. It functions in the pathway amino-acid biosynthesis; L-valine biosynthesis; L-valine from pyruvate: step 3/4. Functionally, functions in the biosynthesis of branched-chain amino acids. Catalyzes the dehydration of (2R,3R)-2,3-dihydroxy-3-methylpentanoate (2,3-dihydroxy-3-methylvalerate) into 2-oxo-3-methylpentanoate (2-oxo-3-methylvalerate) and of (2R)-2,3-dihydroxy-3-methylbutanoate (2,3-dihydroxyisovalerate) into 2-oxo-3-methylbutanoate (2-oxoisovalerate), the penultimate precursor to L-isoleucine and L-valine, respectively. This chain is Dihydroxy-acid dehydratase, found in Pseudomonas putida (strain W619).